A 308-amino-acid polypeptide reads, in one-letter code: Acetyl-coenzyme A carboxylase carboxyl transferase subunit alpha (308 aa).

A CoA carboxyltransferase C-terminal domain is found at 36-286; the sequence is ELEKEVSSVY…ESYFLKAFEE (251 aa).

The protein belongs to the AccA family. In terms of assembly, acetyl-CoA carboxylase is a heterohexamer composed of biotin carboxyl carrier protein (AccB), biotin carboxylase (AccC) and two subunits each of ACCase subunit alpha (AccA) and ACCase subunit beta (AccD).

It localises to the cytoplasm. The enzyme catalyses N(6)-carboxybiotinyl-L-lysyl-[protein] + acetyl-CoA = N(6)-biotinyl-L-lysyl-[protein] + malonyl-CoA. Its pathway is lipid metabolism; malonyl-CoA biosynthesis; malonyl-CoA from acetyl-CoA: step 1/1. Functionally, component of the acetyl coenzyme A carboxylase (ACC) complex. First, biotin carboxylase catalyzes the carboxylation of biotin on its carrier protein (BCCP) and then the CO(2) group is transferred by the carboxyltransferase to acetyl-CoA to form malonyl-CoA. The sequence is that of Acetyl-coenzyme A carboxylase carboxyl transferase subunit alpha from Helicobacter hepaticus (strain ATCC 51449 / 3B1).